Consider the following 124-residue polypeptide: Small ribosomal subunit protein uS12 (124 aa).

3-methylthioaspartic acid is present on Asp89.

This sequence belongs to the universal ribosomal protein uS12 family. Part of the 30S ribosomal subunit. Contacts proteins S8 and S17. May interact with IF1 in the 30S initiation complex.

With S4 and S5 plays an important role in translational accuracy. Its function is as follows. Interacts with and stabilizes bases of the 16S rRNA that are involved in tRNA selection in the A site and with the mRNA backbone. Located at the interface of the 30S and 50S subunits, it traverses the body of the 30S subunit contacting proteins on the other side and probably holding the rRNA structure together. The combined cluster of proteins S8, S12 and S17 appears to hold together the shoulder and platform of the 30S subunit. This chain is Small ribosomal subunit protein uS12, found in Sodalis glossinidius (strain morsitans).